A 254-amino-acid polypeptide reads, in one-letter code: MAYSIKLDSFEGPLDLLLHLIDKAEVDIYDIPVAEITEQYLATIDKMQELQLDVASEFVVMAATLLSIKSKMLLPKKEEHVFQQFLDMDVDEIDPREELVARLLEYKRYKMLAENLREMEIGRNQVFTRPAENLSPYVREEDHTVTNVTLYDLINALEKLVKKTKEKEPMTTVSRDEISIKDRMTEIRQAVRSGGMVRFSELFTQGATRTEIVTTFLALLELMKAKHITCVQNQLFQDIIICENGTEGAHTDGL.

Belongs to the ScpA family. In terms of assembly, component of a cohesin-like complex composed of ScpA, ScpB and the Smc homodimer, in which ScpA and ScpB bind to the head domain of Smc. The presence of the three proteins is required for the association of the complex with DNA.

The protein localises to the cytoplasm. In terms of biological role, participates in chromosomal partition during cell division. May act via the formation of a condensin-like complex containing Smc and ScpB that pull DNA away from mid-cell into both cell halves. In Brevibacillus brevis (strain 47 / JCM 6285 / NBRC 100599), this protein is Segregation and condensation protein A.